Consider the following 286-residue polypeptide: Alpha-ketoglutarate-dependent dioxygenase alkB homolog 3 (286 aa).

Residues Met1–Glu46 form a disordered region. Residues Pro17–Ala38 are compositionally biased toward polar residues. Substrate contacts are provided by residues Trp115 and Tyr141–Tyr143. The Fe2OG dioxygenase domain maps to Thr172 to Tyr278. Leu177 is subject to (4R)-5-hydroxyleucine; alternate. Leu177 bears the (4R)-5-oxoleucine; alternate mark. 2-oxoglutarate is bound at residue Asn179–Tyr181. 2 residues coordinate Fe cation: His191 and Asp193. Substrate is bound at residue Asp194. Residue His257 participates in Fe cation binding. 2-oxoglutarate is bound by residues Arg269–Arg275 and Arg275.

The protein belongs to the alkB family. In terms of assembly, interacts with the ASCC complex composed of ASCC1, ASCC2 and ASCC3. Interacts directly with ASCC3, and is thereby recruited to the ASCC complex. Interacts with OTUD4; the interaction is direct. Interacts with USP7 and USP9X. Fe(2+) serves as cofactor. Ubiquitinated; undergoes 'Lys-48'-linked polyubiquitination. OTUD4 promotes USP7 and USP9X-dependent deubiquitination of 'Lys-48'-polyubiquitinated ALKBH3 promoting the repair of alkylated DNA lesions. Detected in testis, kidney, liver and heart.

Its subcellular location is the nucleus. The protein resides in the cytoplasm. It catalyses the reaction an N(1)-methyladenosine in mRNA + 2-oxoglutarate + O2 = an adenosine in mRNA + formaldehyde + succinate + CO2. The enzyme catalyses a methylated nucleobase within DNA + 2-oxoglutarate + O2 = a nucleobase within DNA + formaldehyde + succinate + CO2. The catalysed reaction is an N(1)-methyl-2'-deoxyadenosine in single-stranded DNA + 2-oxoglutarate + O2 = a 2'-deoxyadenosine in single-stranded DNA + formaldehyde + succinate + CO2 + H(+). It carries out the reaction an N(3)-methyl-2'-deoxycytidine in single-stranded DNA + 2-oxoglutarate + O2 = a 2'-deoxycytidine in single-stranded DNA + formaldehyde + succinate + CO2 + H(+). It catalyses the reaction a 3,N(4)-etheno-2'-deoxycytidine in single-stranded DNA + 2-oxoglutarate + O2 + H2O = a 2'-deoxycytidine in single-stranded DNA + glyoxal + succinate + CO2. With respect to regulation, activated by ascorbate. Dioxygenase that mediates demethylation of DNA and RNA containing 1-methyladenosine (m1A). Repairs alkylated DNA containing 1-methyladenosine (m1A) and 3-methylcytosine (m3C) by oxidative demethylation. Has a strong preference for single-stranded DNA. Able to process alkylated m3C within double-stranded regions via its interaction with ASCC3, which promotes DNA unwinding to generate single-stranded substrate needed for ALKBH3. Can repair exocyclic 3,N4-ethenocytosine adducs in single-stranded DNA. Also acts on RNA. Demethylates N(1)-methyladenosine (m1A) RNA, an epigenetic internal modification of messenger RNAs (mRNAs) highly enriched within 5'-untranslated regions (UTRs) and in the vicinity of start codons. Requires molecular oxygen, alpha-ketoglutarate and iron. The sequence is that of Alpha-ketoglutarate-dependent dioxygenase alkB homolog 3 from Mus musculus (Mouse).